The following is a 299-amino-acid chain: AT-hook motif nuclear-localized protein 25 (299 aa).

Disordered regions lie at residues 1–87 (MSSY…RDSP) and 216–251 (EEET…CESN). Composition is skewed to basic and acidic residues over residues 14–23 (HLQRPEDSRT) and 33–42 (NRSEADEAKA). Low complexity-rich tracts occupy residues 44–72 (TTPT…PAGS) and 224–239 (TTGV…QSSE). Residues 63–75 (RRPRGRPAGSKNK) constitute a DNA-binding region (a.T hook). In terms of domain architecture, PPC spans 87 to 233 (PNVLRSHVLE…TTGVQQQQPE (147 aa)). Residues 240-251 (VTGSGAQACESN) show a composition bias toward polar residues.

Homodimer. Interacts with AHL27 and AHL29. In terms of tissue distribution, expressed in seedlings, leaves, stems, floral tips and flowers.

It localises to the nucleus. In terms of biological role, transcription factor that specifically binds AT-rich DNA sequences related to the nuclear matrix attachment regions (MARs). Binds the DNA sequence GNFEI (GA-negative feedback element I) in the GA3OX1 promoter. Binding to GNFEI sequence is required for GA-negative feedback regulation of GA3OX1. The chain is AT-hook motif nuclear-localized protein 25 from Arabidopsis thaliana (Mouse-ear cress).